We begin with the raw amino-acid sequence, 101 residues long: uncharacterized protein (101 aa).

Positions 1 to 25 (MISIPFRSTMSRTLVFIILPTVLSC) are cleaved as a signal peptide.

This is an uncharacterized protein from Saccharomyces cerevisiae (strain ATCC 204508 / S288c) (Baker's yeast).